The following is a 159-amino-acid chain: NADH-quinone oxidoreductase subunit I (159 aa).

4Fe-4S ferredoxin-type domains lie at 51 to 80 (RRYENGEERCIACKLCEAVCPAQAIVIESD) and 90 to 119 (TRYDIDMTKCIYCGLCQEACPVDAIVEGPN). [4Fe-4S] cluster-binding residues include cysteine 60, cysteine 63, cysteine 66, cysteine 70, cysteine 99, cysteine 102, cysteine 105, and cysteine 109.

The protein belongs to the complex I 23 kDa subunit family. NDH-1 is composed of 14 different subunits. Subunits NuoA, H, J, K, L, M, N constitute the membrane sector of the complex. The cofactor is [4Fe-4S] cluster.

The protein localises to the cell inner membrane. It carries out the reaction a quinone + NADH + 5 H(+)(in) = a quinol + NAD(+) + 4 H(+)(out). In terms of biological role, NDH-1 shuttles electrons from NADH, via FMN and iron-sulfur (Fe-S) centers, to quinones in the respiratory chain. The immediate electron acceptor for the enzyme in this species is believed to be ubiquinone. Couples the redox reaction to proton translocation (for every two electrons transferred, four hydrogen ions are translocated across the cytoplasmic membrane), and thus conserves the redox energy in a proton gradient. The polypeptide is NADH-quinone oxidoreductase subunit I (Rickettsia typhi (strain ATCC VR-144 / Wilmington)).